A 156-amino-acid chain; its full sequence is Small ribosomal subunit protein uS7 (156 aa).

The protein belongs to the universal ribosomal protein uS7 family. Part of the 30S ribosomal subunit. Contacts proteins S9 and S11.

Its function is as follows. One of the primary rRNA binding proteins, it binds directly to 16S rRNA where it nucleates assembly of the head domain of the 30S subunit. Is located at the subunit interface close to the decoding center, probably blocks exit of the E-site tRNA. This chain is Small ribosomal subunit protein uS7, found in Clavibacter michiganensis subsp. michiganensis (strain NCPPB 382).